Reading from the N-terminus, the 862-residue chain is Squamosa promoter-binding-like protein 1 (862 aa).

Positions 55-98 (KRRRVSPEDDDGEECINAATTNGDDGQISGQRGRSSEDEMPRQG) are disordered. A compositionally biased stretch (polar residues) spans 72 to 87 (AATTNGDDGQISGQRG). The SBP-type zinc finger occupies 104-181 (GPCCQVDGCT…AQHNRRRRKV (78 aa)). Residues Cys-107, Cys-112, Cys-129, His-132, Cys-148, Cys-151, His-155, and Cys-167 each coordinate Zn(2+). The short motif at 164 to 180 (KKSCRSRLAQHNRRRRK) is the Bipartite nuclear localization signal element.

As to expression, ubiquitous.

Its subcellular location is the nucleus. In terms of biological role, trans-acting factor that binds specifically to the consensus nucleotide sequence 5'-TNCGTACAA-3'. This is Squamosa promoter-binding-like protein 1 (SPL1) from Oryza sativa subsp. japonica (Rice).